The sequence spans 2867 residues: Reticulocyte-binding protein 2 (2867 aa).

The first 21 residues, methionine 1–cysteine 21, serve as a signal peptide directing secretion. At asparagine 22 to arginine 2805 the chain is on the extracellular side. Disordered stretches follow at residues lysine 52 to asparagine 73, glutamate 2650 to proline 2682, and aspartate 2712 to glutamate 2799. A compositionally biased stretch (low complexity) spans asparagine 61–asparagine 73. Basic and acidic residues predominate over residues lysine 2659 to alanine 2674. The span at aspartate 2725–tyrosine 2736 shows a compositional bias: polar residues. Acidic residues predominate over residues glutamate 2743–histidine 2754. Positions aspartate 2755 to glutamate 2799 are enriched in basic and acidic residues. A run of 7 repeats spans residues histidine 2758–threonine 2761, histidine 2762–threonine 2765, histidine 2766–threonine 2769, histidine 2770–threonine 2773, histidine 2774–threonine 2777, histidine 2778–threonine 2781, and histidine 2782–threonine 2785. The 7 X 4 AA tandem repeats of H-D-D-T stretch occupies residues histidine 2758 to threonine 2785. Residues leucine 2806–lysine 2826 traverse the membrane as a helical segment. Topologically, residues aspartate 2827–aspartate 2867 are cytoplasmic.

It is found in the cell membrane. Its function is as follows. Involved in reticulocyte adhesion. Specifically binds to human reticulocyte cells. This chain is Reticulocyte-binding protein 2 (RBP-2), found in Plasmodium vivax (strain Belem).